We begin with the raw amino-acid sequence, 356 residues long: MIKAAATLKSLQYRQNSLTDCYGRLSFGPVNPGQGLTIGNTLRRILLNDLPGIGVIGAEINGVQSEFSTLPGIRESVIEIFLNLRELIFTPTATCAQKVKQTKPFVYAKLNSELKIDNFPYVVTAKDLHIPEYEFVDPNQQIATILSPTAAENFKLTLLIGQGRGYQSWKKLPGVPQLMDQRFFEQFDSTQTNSKSVTFPIDAIFMPIRQVNFTVQEHSVDGEYIYFEVWTNGSINPFDAVKSAAKVGMKLMTACLTTLQDQQVYLDESKLPETPNFVQVNYNKMESESNFDQIFIEQLELSLRAYNCLKRANILTLADLSQQSFRDLMKLRNFGQKSADEVRAALSTYGIELKED.

Residues 1-259 are alpha N-terminal domain (alpha-NTD); sequence MIKAAATLKS…KLMTACLTTL (259 aa). An alpha C-terminal domain (alpha-CTD) region spans residues 277–356; it reads FVQVNYNKME…STYGIELKED (80 aa).

The protein belongs to the RNA polymerase alpha chain family. As to quaternary structure, in plastids the minimal PEP RNA polymerase catalytic core is composed of four subunits: alpha, beta, beta', and beta''. When a (nuclear-encoded) sigma factor is associated with the core the holoenzyme is formed, which can initiate transcription.

It is found in the plastid. Its subcellular location is the chloroplast. The enzyme catalyses RNA(n) + a ribonucleoside 5'-triphosphate = RNA(n+1) + diphosphate. DNA-dependent RNA polymerase catalyzes the transcription of DNA into RNA using the four ribonucleoside triphosphates as substrates. This chain is DNA-directed RNA polymerase subunit alpha, found in Ostreococcus tauri.